Here is a 124-residue protein sequence, read N- to C-terminus: MSTPNCKITTQRLVVNDMKPLSIETEIISLTKEIITHTFIYLINHECIVRKLNEQQATFTFLVNYEMKLLHKVGSTKYNRYTEYNSKYGTFPMPIFINHAGFLECIGIKPTRNTPVIYKYDLNP.

Positions 121–124 match the DLNP; interaction with MAP1B motif; sequence DLNP.

Belongs to the pneumovirus non-structural protein 2 family. As to quaternary structure, monomer (instable). Homomultimer. Heteromultimer with NS1. Interacts with host RIGI (via N-terminus); this interaction prevents host signaling pathway involved in interferon production. Interacts with host MAP1B/microtubule-associated protein 1B.

The protein localises to the host mitochondrion. Plays a major role in antagonizing the type I IFN-mediated antiviral response. Acts cooperatively with NS1 to repress activation and nuclear translocation of host IFN-regulatory factor IRF3. Interacts with the host cytoplasmic sensor of viral nucleic acids RIGI and prevents the interaction with its downstream partner MAVS. Together with NS2, participates in the proteasomal degradation of host STAT2, IRF3, IRF7, TBK1 and RIGI through a NS-degradasome involving CUL2 and Elongin-C. The degradasome requires an intact mitochondrial MAVS. Induces host SOCS1 expression. Induces activation of NF-kappa-B. Suppresses premature apoptosis by an NF-kappa-B-dependent, interferon-independent mechanism promoting continued viral replication. The polypeptide is Non-structural protein 2 (1B) (Ovine respiratory syncytial virus (strain WSU 83-1578) (ORSV)).